Reading from the N-terminus, the 1112-residue chain is Electrogenic sodium bicarbonate cotransporter 4 (1112 aa).

The segment covering 1–13 (MKVEEKAGVKKLE) has biased composition (basic and acidic residues). 3 disordered regions span residues 1 to 80 (MKVE…SSLG), 220 to 255 (KKPI…HHST), and 439 to 469 (GRSG…NEAE). The Cytoplasmic segment spans residues 1-513 (MKVEEKAGVK…DFYDGFHIQS (513 aa)). 2 stretches are compositionally biased toward polar residues: residues 53–67 (QRVQ…SQQD) and 233–244 (SVSTTNRSSARS). A compositionally biased stretch (gly residues) spans 444–465 (SAGGGGSGGGAGGSGAGGGGSG). The helical transmembrane segment at 514-536 (ISAVLFIYLGCITNAITFGGLLG) threads the bilayer. Residues 537-547 (DATDNYQGVME) are Extracellular-facing. The chain crosses the membrane as a helical span at residues 548–579 (SFLGTAMAGSLFCLFSGQPLIILSSTGPILIF). Over 580 to 598 (EKLLFDFSKANGLDYMEFR) the chain is Cytoplasmic. The helical transmembrane segment at 599–620 (LWIGLHSAIQCLILVATDASFI) threads the bilayer. The Extracellular portion of the chain corresponds to 621-734 (IKYITRFTEE…LGSSCQFVPD (114 aa)). The chain crosses the membrane as a helical span at residues 735–753 (LALMSFILFFGTYSMTLTL). Residues 754 to 772 (KKFKFSRYFPTKVRTLVAD) lie on the Cytoplasmic side of the membrane. Residues 773 to 792 (FSIVFSILLFCGIDACFGLQ) form a helical membrane-spanning segment. Over 793-820 (TPKLHVPNVIKPTRPDRGWFVAPFGKNP) the chain is Extracellular. A helical transmembrane segment spans residues 821 to 839 (WWVYPASILPALLVTILIF). At 840–858 (MDQQITAVIVNRKENKLRK) the chain is on the cytoplasmic side. A helical membrane pass occupies residues 859-875 (AAGYHLDLFWVGILMAL). The Extracellular portion of the chain corresponds to 876-880 (CSFMG). Residues 881-900 (LPWYVAATVISIAHIDSLKM) traverse the membrane as a helical segment. Topologically, residues 901-920 (ETETSAPGEQPQFLGVREQR) are cytoplasmic. A helical membrane pass occupies residues 921 to 940 (VTGVMVFILTGISVFLAPIL). At 941–945 (KYIPM) the chain is on the extracellular side. A helical membrane pass occupies residues 946–966 (PVLYGVFLYMGVASLNGIQFW). Over 967–992 (DRCKLFLMPAKHQPDHAFLRHVPLRR) the chain is Cytoplasmic. The helical transmembrane segment at 993–1010 (IHLFTLVQILCLALLWIL) threads the bilayer. Over 1011 to 1015 (KSTMA) the chain is Extracellular. Residues 1016–1033 (AIIFPVMILGLIIVRRLL) traverse the membrane as a helical segment. Residues 1034–1112 (DLIFSQHDLA…KRSSSWSHSL (79 aa)) are Cytoplasmic-facing. A compositionally biased stretch (basic and acidic residues) spans 1055 to 1074 (KESDRKKRRKEVHENTDKEP). The disordered stretch occupies residues 1055 to 1112 (KESDRKKRRKEVHENTDKEPQFLPPSVVKIPMEGIPSDPQNGIHCVGRKRSSSWSHSL).

It belongs to the anion exchanger (TC 2.A.31) family. Observed in hepatocytes and in the apical region of bile duct intrahepatic cholangiocytes of liver. Also observed in uroepithelium cells lining the outer pelvic wall of the kidney (at protein level). Highly expressed in colon, distal colon, liver, kidney and testis. Moderate expression in duodenum and stomach and weak expression in heart. In kidney, very weakly expressed in the inner medulla, but abundantly expressed in cortex and outer medulla in the medullary thick ascending and cortical thick ascending limbs of the loop of Henle.

The protein localises to the basolateral cell membrane. It is found in the apical cell membrane. The enzyme catalyses 2 hydrogencarbonate(out) + Na(+)(out) = 2 hydrogencarbonate(in) + Na(+)(in). It catalyses the reaction 3 hydrogencarbonate(out) + Na(+)(out) = 3 hydrogencarbonate(in) + Na(+)(in). Functionally, mediates sodium- and bicarbonate-dependent electrogenic sodium bicarbonate cotransport, with a Na(+):HCO3(-) stoichiometry varying from 1:2 to 1:3. The polypeptide is Electrogenic sodium bicarbonate cotransporter 4 (Rattus norvegicus (Rat)).